The following is a 351-amino-acid chain: Cytoplasmic dynein 2 light intermediate chain 1 (351 aa).

It belongs to the dynein light intermediate chain family. In terms of assembly, light intermediate chain of the cytoplasmic dynein complex 2, a multisubunit complex composed at least of eleven different proteins. The cytoplasmic dynein 2 complex consists of two catalytic heavy chains (HCs) and a number of non-catalytic subunits presented by intermediate chains (ICs), light intermediate chains (LICs) and light chains (LCs). Among them, a heavy chain (DYNC2H1), two intermediate chains (DYNC2I2 and DYNC2I1), a light intermediate chain (DYNC2LI1), and a light chain (DYNLT2B) are unique to the dynein-2 complex, but a subset of light chains are also shared by dynein-1 and dynein-2 complexes. Dynein-2 complex is built around two copies of cytoplasmic dynein 2 heavy chain 1 (DYNC2H1). The C-terminal region of DYNC2H1 forms the motor domain, which converts the energy from ATP hydrolysis into movement. Its N-terminal region forms the tail, an extended structure that binds the other subunits and holds the two heavy chains in a homodimer. Interacts with DYNC2H1 (via N-terminus); this interaction stabilizes the dynein-2 complex structure. As to expression, expressed in bone, brain, kidney, and cartilage. Lower expression in heart, liver, lung, placenta and thymus.

It is found in the golgi apparatus. The protein localises to the cytoplasm. Its subcellular location is the cell projection. The protein resides in the cilium. It localises to the cytoskeleton. It is found in the cilium basal body. The protein localises to the cilium axoneme. Its subcellular location is the microtubule organizing center. The protein resides in the centrosome. Acts as one of several non-catalytic accessory components of the cytoplasmic dynein 2 complex (dynein-2 complex), a motor protein complex that drives the movement of cargos along microtubules within cilia and flagella in concert with the intraflagellar transport (IFT) system, facilitating the assembly of these organelles. Involved in the regulation of ciliary length. This is Cytoplasmic dynein 2 light intermediate chain 1 (DYNC2LI1) from Homo sapiens (Human).